The following is a 373-amino-acid chain: 8-amino-7-oxononanoate synthase (373 aa).

Arg-16 serves as a coordination point for substrate. A pyridoxal 5'-phosphate-binding site is contributed by 93–94; sequence GF. Residue His-118 participates in substrate binding. Residues Ser-165, 190-193, and 222-225 contribute to the pyridoxal 5'-phosphate site; these read DEAH and TFSK. At Lys-225 the chain carries N6-(pyridoxal phosphate)lysine. Position 334 (Thr-334) interacts with substrate.

This sequence belongs to the class-II pyridoxal-phosphate-dependent aminotransferase family. BioF subfamily. In terms of assembly, homodimer. It depends on pyridoxal 5'-phosphate as a cofactor.

It catalyses the reaction 6-carboxyhexanoyl-[ACP] + L-alanine + H(+) = (8S)-8-amino-7-oxononanoate + holo-[ACP] + CO2. It functions in the pathway cofactor biosynthesis; biotin biosynthesis. Catalyzes the decarboxylative condensation of pimeloyl-[acyl-carrier protein] and L-alanine to produce 8-amino-7-oxononanoate (AON), [acyl-carrier protein], and carbon dioxide. This chain is 8-amino-7-oxononanoate synthase, found in Helicobacter pylori (strain ATCC 700392 / 26695) (Campylobacter pylori).